Here is a 322-residue protein sequence, read N- to C-terminus: MAEKNKKEHPVTKDRLHPRNKHRERYDFDALIATTPELAQYVTLNIYNDQSIDFFNPAAVLCLNQALLKHYYGIDEWNIPEGYLCPPIPGRADYIHNIAALLGTSANDVIPVGPAIKCLDIGVGANCVYPIIGNNEYGWSFVGADVDPVSVASAKNIVDKNKVLQGNVEIRLQNHPLDIFYGIIGEGERFDVTICNPPFHASAEDAAAGTLRKLSNLQHKKVTKANLNFGGQHNELWCEGGESAFVREMILESKKFAASCLWFSTLISKQTNLQKAYDQLEVLAPFDVRTIPMGQGNKSSRLIAWTFQSKEAQAKWVSARWK.

Belongs to the methyltransferase superfamily. METTL16/RlmF family.

Its subcellular location is the cytoplasm. The enzyme catalyses adenosine(1618) in 23S rRNA + S-adenosyl-L-methionine = N(6)-methyladenosine(1618) in 23S rRNA + S-adenosyl-L-homocysteine + H(+). Specifically methylates the adenine in position 1618 of 23S rRNA. This Cytophaga hutchinsonii (strain ATCC 33406 / DSM 1761 / CIP 103989 / NBRC 15051 / NCIMB 9469 / D465) protein is Ribosomal RNA large subunit methyltransferase F.